Consider the following 374-residue polypeptide: Probable dual-specificity RNA methyltransferase RlmN (374 aa).

Residues 1 to 17 show a composition bias toward basic and acidic residues; sequence MEKNEISEERRTQEKEK. The disordered stretch occupies residues 1-22; the sequence is MEKNEISEERRTQEKEKQHGHR. Glutamate 119 serves as the catalytic Proton acceptor. In terms of domain architecture, Radical SAM core spans 125–360; that stretch reads SEERITACIS…VTVRKSQGAT (236 aa). A disulfide bridge links cysteine 132 with cysteine 365. [4Fe-4S] cluster-binding residues include cysteine 139, cysteine 143, and cysteine 146. S-adenosyl-L-methionine is bound by residues 190–191, serine 223, 246–248, and asparagine 322; these read GE and SLH. Cysteine 365 serves as the catalytic S-methylcysteine intermediate.

This sequence belongs to the radical SAM superfamily. RlmN family. It depends on [4Fe-4S] cluster as a cofactor.

The protein localises to the cytoplasm. It carries out the reaction adenosine(2503) in 23S rRNA + 2 reduced [2Fe-2S]-[ferredoxin] + 2 S-adenosyl-L-methionine = 2-methyladenosine(2503) in 23S rRNA + 5'-deoxyadenosine + L-methionine + 2 oxidized [2Fe-2S]-[ferredoxin] + S-adenosyl-L-homocysteine. The enzyme catalyses adenosine(37) in tRNA + 2 reduced [2Fe-2S]-[ferredoxin] + 2 S-adenosyl-L-methionine = 2-methyladenosine(37) in tRNA + 5'-deoxyadenosine + L-methionine + 2 oxidized [2Fe-2S]-[ferredoxin] + S-adenosyl-L-homocysteine. In terms of biological role, specifically methylates position 2 of adenine 2503 in 23S rRNA and position 2 of adenine 37 in tRNAs. This is Probable dual-specificity RNA methyltransferase RlmN from Chlorobaculum tepidum (strain ATCC 49652 / DSM 12025 / NBRC 103806 / TLS) (Chlorobium tepidum).